Consider the following 214-residue polypeptide: Calcineurin B homologous protein 3 (214 aa).

A lipid anchor (N-myristoyl glycine) is attached at glycine 2. Residues 110–145 enclose the EF-hand domain; sequence CRTDKLRFLFNMYDSDNDNKITLEEYRKVVEELLSG. Ca(2+)-binding residues include aspartate 123, aspartate 125, aspartate 127, lysine 129, and glutamate 134.

It belongs to the calcineurin regulatory subunit family. CHP subfamily. Monomer. Homodimer.

It is found in the nucleus. It localises to the cytoplasm. Its subcellular location is the membrane. The protein resides in the cell membrane. The protein localises to the cell projection. It is found in the lamellipodium. It localises to the ruffle membrane. Its function is as follows. Functions as an integral cofactor in cell pH regulation by controlling plasma membrane-type Na(+)/H(+) exchange activity. Promotes the induction of hematopoietic stem cell differentiation toward megakaryocytic lineage. Essential for the coupling of ERK cascade activation with the expression of ETS family genes in megakaryocytic differentiation. Also involved in granulocytic differentiation in a ERK-dependent manner. Inhibits the phosphatase activity of calcineurin. The sequence is that of Calcineurin B homologous protein 3 from Xenopus laevis (African clawed frog).